The sequence spans 321 residues: MIKLLYPEFWQKRNIIAYLLLPISLIYQFLGYLRASLARPIMLPAKVICVGNCSVGGTGKTQIVMYLAKLLKARNVSFVIVTKAYGSNLKSATTIHQGHTALEVGDEGVILAKYGAVIATKNIKEIVPLINELKPDIIIVDDFLQNPYFHKDFTIVSVDSQRLFGNGFLIPAGPLRQYPNKALDAADLIFLVSSHQDKIPQILTPYVNKLINAQIVPSNNIDKTKNYFAFSGIGNPERFFATLKNYGLNITGYKIFPDHYNYLQADLENLYSLAKEHNAILVTTRKDHVKFNDLNNNIVCLDVELSINHPDLLNEKIFKKA.

Residue 54–61 coordinates ATP; that stretch reads SVGGTGKT.

Belongs to the LpxK family.

It carries out the reaction a lipid A disaccharide + ATP = a lipid IVA + ADP + H(+). It functions in the pathway glycolipid biosynthesis; lipid IV(A) biosynthesis; lipid IV(A) from (3R)-3-hydroxytetradecanoyl-[acyl-carrier-protein] and UDP-N-acetyl-alpha-D-glucosamine: step 6/6. Its function is as follows. Transfers the gamma-phosphate of ATP to the 4'-position of a tetraacyldisaccharide 1-phosphate intermediate (termed DS-1-P) to form tetraacyldisaccharide 1,4'-bis-phosphate (lipid IVA). This Rickettsia rickettsii protein is Tetraacyldisaccharide 4'-kinase.